The chain runs to 302 residues: Lipoyl synthase (302 aa).

Positions 44, 49, 55, 70, 74, 77, and 283 each coordinate [4Fe-4S] cluster. Residues 56–272 form the Radical SAM core domain; sequence WSKKHATVMI…AKVARSKGFL (217 aa).

This sequence belongs to the radical SAM superfamily. Lipoyl synthase family. Requires [4Fe-4S] cluster as cofactor.

Its subcellular location is the cytoplasm. It carries out the reaction [[Fe-S] cluster scaffold protein carrying a second [4Fe-4S](2+) cluster] + N(6)-octanoyl-L-lysyl-[protein] + 2 oxidized [2Fe-2S]-[ferredoxin] + 2 S-adenosyl-L-methionine + 4 H(+) = [[Fe-S] cluster scaffold protein] + N(6)-[(R)-dihydrolipoyl]-L-lysyl-[protein] + 4 Fe(3+) + 2 hydrogen sulfide + 2 5'-deoxyadenosine + 2 L-methionine + 2 reduced [2Fe-2S]-[ferredoxin]. It functions in the pathway protein modification; protein lipoylation via endogenous pathway; protein N(6)-(lipoyl)lysine from octanoyl-[acyl-carrier-protein]: step 2/2. Functionally, catalyzes the radical-mediated insertion of two sulfur atoms into the C-6 and C-8 positions of the octanoyl moiety bound to the lipoyl domains of lipoate-dependent enzymes, thereby converting the octanoylated domains into lipoylated derivatives. This Orientia tsutsugamushi (strain Boryong) (Rickettsia tsutsugamushi) protein is Lipoyl synthase.